A 166-amino-acid chain; its full sequence is Thioredoxin, mitochondrial (166 aa).

A mitochondrion-targeting transit peptide spans 1 to 59 (MAQRLLLGRFLTSVISRKPPQGVWASLTSKTLQTPQYNAGGLTVMPSPARTVHTTRVCL). In terms of domain architecture, Thioredoxin spans 61 to 166 (TFNVQDGPDF…LEAFLKKLIG (106 aa)). Catalysis depends on nucleophile residues cysteine 90 and cysteine 93. Residues cysteine 90 and cysteine 93 are joined by a disulfide bond. Position 152 is an N6-acetyllysine; alternate (lysine 152). Lysine 152 is subject to N6-succinyllysine; alternate.

Belongs to the thioredoxin family. As to quaternary structure, monomer.

It is found in the mitochondrion. Its function is as follows. Important for the control of mitochondrial reactive oxygen species homeostasis, apoptosis regulation and cell viability. Is involved in various redox reactions including the reduction of protein disulfide bonds, through the reversible oxidation of its active center dithiol to a disulfide. The polypeptide is Thioredoxin, mitochondrial (Txn2) (Mus musculus (Mouse)).